Here is a 203-residue protein sequence, read N- to C-terminus: Ribosomal RNA large subunit methyltransferase E (203 aa).

S-adenosyl-L-methionine-binding residues include G59, W61, D79, N95, and D118. Catalysis depends on K158, which acts as the Proton acceptor.

It belongs to the class I-like SAM-binding methyltransferase superfamily. RNA methyltransferase RlmE family.

It localises to the cytoplasm. It carries out the reaction uridine(2552) in 23S rRNA + S-adenosyl-L-methionine = 2'-O-methyluridine(2552) in 23S rRNA + S-adenosyl-L-homocysteine + H(+). In terms of biological role, specifically methylates the uridine in position 2552 of 23S rRNA at the 2'-O position of the ribose in the fully assembled 50S ribosomal subunit. The sequence is that of Ribosomal RNA large subunit methyltransferase E from Wigglesworthia glossinidia brevipalpis.